We begin with the raw amino-acid sequence, 447 residues long: Nisin biosynthesis sensor protein NisK (447 aa).

Transmembrane regions (helical) follow at residues 15–35 (VIEI…LTFF) and 147–167 (TYLF…YHLI). The region spanning 235 to 447 (ALSHDVKTPL…GAEVILKIKK (213 aa)) is the Histidine kinase domain. H238 is modified (phosphohistidine; by autocatalysis).

Its subcellular location is the cell membrane. It catalyses the reaction ATP + protein L-histidine = ADP + protein N-phospho-L-histidine.. Member of the two-component regulatory system NisK/NisR involved in the regulation of the biosynthesis of lantibiotic nisin. NisK may function as a membrane-associated protein kinase that phosphorylates NisR in response to environmental signals. In Lactococcus lactis subsp. lactis (Streptococcus lactis), this protein is Nisin biosynthesis sensor protein NisK (nisK).